The following is a 393-amino-acid chain: NAD(P)H-quinone oxidoreductase subunit H, chloroplastic (393 aa).

Belongs to the complex I 49 kDa subunit family. NDH is composed of at least 16 different subunits, 5 of which are encoded in the nucleus.

The protein resides in the plastid. The protein localises to the chloroplast thylakoid membrane. It catalyses the reaction a plastoquinone + NADH + (n+1) H(+)(in) = a plastoquinol + NAD(+) + n H(+)(out). It carries out the reaction a plastoquinone + NADPH + (n+1) H(+)(in) = a plastoquinol + NADP(+) + n H(+)(out). Its function is as follows. NDH shuttles electrons from NAD(P)H:plastoquinone, via FMN and iron-sulfur (Fe-S) centers, to quinones in the photosynthetic chain and possibly in a chloroplast respiratory chain. The immediate electron acceptor for the enzyme in this species is believed to be plastoquinone. Couples the redox reaction to proton translocation, and thus conserves the redox energy in a proton gradient. This Gossypium hirsutum (Upland cotton) protein is NAD(P)H-quinone oxidoreductase subunit H, chloroplastic.